Reading from the N-terminus, the 1225-residue chain is MNNIPIKPKDAQWTDAQWKSIYANGQDVLVAAAAGSGKTAVLVERIIQKIIRDEIDVDKLLVVTFTNLSAREMKHRVDQRIQQASIEDPRNEHLKNQRIKIHQAQISTLHSFCLKIIQQHYDVIDLDPNFRTISDVENVLLLEQSIDEVLEKHYDTPDIEFLTLVEQLSSDRNDDNFRDLLKRFYNFSIANPSPFEWLDSLVEIYTDDNKHKLYLDELERLSKIYIKAAYHTLLEAENNFLNCIEAEKHLDVIKLEKFKCEKMIEGNVINFEEIINYTSEKLPTITKKLKDTNEDEGISSQFLTNAKDFFDDYKKLLSEVKNKYLMRSYEDLKVDMKRLAPRIQYLVQIVKDIINGFAEKKRSRNVLDFSDYEHFALQILTDQEGNASPIAKEYRSQFEEILVDEYQDTNQVQEAIISKIKRGDESNGNLFMVGDVKQSIYKFRQADPTLFMDKYHRFTKDGDQSGLRIDLSKNFRSRKEVLATTNYLFDHMMDEEVGEIEYDADARLYFGATKYSDKSMPLELHALIQDKSSDNDLEKSEQEARYIAEQVKYIIEHKQVYDMKSETYRQATFKDIVILERGLKNARNLQQVFKDYNIPFHVNSKEGYFEQTEVRLVLSFLRTVDNPLQDIYLVGLMRSVIYQFTEDELANIRVQSMNDDYFYQSILHYMKDQEANPLLVEKLEHFMDDINMYQEYSQSHPVYQLIDKFYNDHYVIQYFSGLIGGKGRRANLYGLFNKAVEFENSSFRGLYQFIRFIDELIERNKDFGEENVIGPNDNVVRMMTVHSSKGLEFPYVIYSELSKNFNKGDLRKPLILNQKYGLGIDYFDLEQNVTYPSLSSVVIKSITEKELISEEMRLMYVALTRAKEQLILIGTIDKEEALEKLERLPISGNQIALHKRLSADRPFDLIYSILAKYQSTSLLPEYRFEKSIDNLDESLRPTVDIKIAQFEELSIEDSESEQESRNISDLEVEGSHDDTLKQQINDQLSFKYPYLKDTEKPSKQSVSELKRQLETEESGTSYERVRQYRIGVSTYERPKFLRENKKRKANEIGTLMHTVMQHLPFKETRMTETELNDYINELIEKHIIEEDAKKDIQFEAVMNFIRSDLYMTITQADKVYRELPFVVNQARVDEMPESDEDVSIIQGMIDLIFLKDDQYYFVDYKTDAFNKRRGMTDEEVGIQLRDKYKIQMKYYKNTLETILNSKVYGYLYFFQFGQMSIEEDV.

One can recognise a UvrD-like helicase ATP-binding domain in the interval 11–478; that stretch reads AQWTDAQWKS…IDLSKNFRSR (468 aa). 32–39 contributes to the ATP binding site; it reads AAAGSGKT. The region spanning 479 to 790 is the UvrD-like helicase C-terminal domain; the sequence is KEVLATTNYL…RMMTVHSSKG (312 aa). Over residues 999–1014 the composition is skewed to basic and acidic residues; sequence EKPSKQSVSELKRQLE. The interval 999–1018 is disordered; sequence EKPSKQSVSELKRQLETEES.

It belongs to the helicase family. AddA subfamily. In terms of assembly, heterodimer of AddA and AddB/RexB. The cofactor is Mg(2+).

It catalyses the reaction Couples ATP hydrolysis with the unwinding of duplex DNA by translocating in the 3'-5' direction.. It carries out the reaction ATP + H2O = ADP + phosphate + H(+). Functionally, the heterodimer acts as both an ATP-dependent DNA helicase and an ATP-dependent, dual-direction single-stranded exonuclease. Recognizes the chi site generating a DNA molecule suitable for the initiation of homologous recombination. The AddA nuclease domain is required for chi fragment generation; this subunit has the helicase and 3' -&gt; 5' nuclease activities. This Staphylococcus haemolyticus (strain JCSC1435) protein is ATP-dependent helicase/nuclease subunit A.